The following is a 357-amino-acid chain: Peptide chain release factor 1 (357 aa).

An N5-methylglutamine modification is found at glutamine 232.

Belongs to the prokaryotic/mitochondrial release factor family. Methylated by PrmC. Methylation increases the termination efficiency of RF1.

The protein resides in the cytoplasm. Peptide chain release factor 1 directs the termination of translation in response to the peptide chain termination codons UAG and UAA. This Maridesulfovibrio salexigens (strain ATCC 14822 / DSM 2638 / NCIMB 8403 / VKM B-1763) (Desulfovibrio salexigens) protein is Peptide chain release factor 1.